Here is a 122-residue protein sequence, read N- to C-terminus: Large ribosomal subunit protein uL18 (122 aa).

A disordered region spans residues 1-20 (MFKKVSKNANRLSRHQRVRN).

This sequence belongs to the universal ribosomal protein uL18 family. Part of the 50S ribosomal subunit; part of the 5S rRNA/L5/L18/L25 subcomplex. Contacts the 5S and 23S rRNAs.

This is one of the proteins that bind and probably mediate the attachment of the 5S RNA into the large ribosomal subunit, where it forms part of the central protuberance. In Alkaliphilus oremlandii (strain OhILAs) (Clostridium oremlandii (strain OhILAs)), this protein is Large ribosomal subunit protein uL18.